The chain runs to 392 residues: DNA-directed RNA polymerase subunit Rpo1C (392 aa).

Belongs to the RNA polymerase beta' chain family. Part of the 13-subunit RNA polymerase complex.

It localises to the cytoplasm. It catalyses the reaction RNA(n) + a ribonucleoside 5'-triphosphate = RNA(n+1) + diphosphate. DNA-dependent RNA polymerase (RNAP) catalyzes the transcription of DNA into RNA using the four ribonucleoside triphosphates as substrates. Forms part of the jaw domain. The polypeptide is DNA-directed RNA polymerase subunit Rpo1C (Saccharolobus solfataricus (strain ATCC 35092 / DSM 1617 / JCM 11322 / P2) (Sulfolobus solfataricus)).